The chain runs to 426 residues: GTPase HflX (426 aa).

A Hflx-type G domain is found at 198-365 (PTVSLVGYTN…ALTERLSGEV (168 aa)). Residues 204–211 (GYTNAGKS), 229–233 (FATLD), 251–254 (DTVG), 317–320 (NKID), and 343–345 (SAQ) each bind GTP. Residues Ser211 and Thr231 each contribute to the Mg(2+) site.

Belongs to the TRAFAC class OBG-HflX-like GTPase superfamily. HflX GTPase family. In terms of assembly, monomer. Associates with the 50S ribosomal subunit. This interaction occurs in the presence of GTP, GDP, ATP or ADP, but not in their absence. Mg(2+) is required as a cofactor.

Its subcellular location is the cytoplasm. Intrinsic GTPase activity is very slow and can be stimulated by the presence of 50S ribosomal subunits or 70S ribosomes. GTPase activity is inhibited by ATP. Functionally, GTPase that associates with the 50S ribosomal subunit and may have a role during protein synthesis or ribosome biogenesis. In vitro, also exhibits ATPase activity. In Escherichia coli (strain K12), this protein is GTPase HflX.